Reading from the N-terminus, the 609-residue chain is CTTNBP2 N-terminal-like protein (609 aa).

Residues 1–10 (MEQNSNSSVA) are compositionally biased toward polar residues. Residues 1-29 (MEQNSNSSVADTFAEAPATDADYGTENCS) form a disordered region. 2 coiled-coil regions span residues 182–264 (RMVN…QKQI) and 303–370 (IAEG…QQLG). Positions 556 to 584 (PPAGARGAPPPIPTKPIVPPKREPSLSRL) are disordered. The span at 563–574 (APPPIPTKPIVP) shows a compositional bias: pro residues. At S586 the chain carries Phosphoserine.

It localises to the cell projection. It is found in the lamellipodium. The protein localises to the cytoplasm. The protein resides in the cytoskeleton. Its subcellular location is the stress fiber. Its function is as follows. Regulates lamellipodial actin dynamics in a Cortactin-dependent manner and is therefore likely involved in controlling actin branch density, actin-retrograde flow rates and lamellipodial protrusion. Functions by slowing the dissociation of Cortactin from Arp2/3 nucleated branches thereby increasing branch nucleation and junction stability. Associates with core striatin-interacting phosphatase and kinase (STRIPAK) complex to form CTTNBP2NL-STRIPAK complexes. STRIPAK complexes have critical roles in protein (de)phosphorylation and are regulators of multiple signaling pathways including Hippo, MAPK, nuclear receptor and cytoskeleton remodeling. Different types of STRIPAK complexes are involved in a variety of biological processes such as cell growth, differentiation, apoptosis, metabolism and immune regulation. In Drosophila melanogaster (Fruit fly), this protein is CTTNBP2 N-terminal-like protein.